The sequence spans 101 residues: Small ribosomal subunit protein uS14 (101 aa).

The protein belongs to the universal ribosomal protein uS14 family. Part of the 30S ribosomal subunit. Contacts proteins S3 and S10.

Binds 16S rRNA, required for the assembly of 30S particles and may also be responsible for determining the conformation of the 16S rRNA at the A site. The sequence is that of Small ribosomal subunit protein uS14 from Burkholderia vietnamiensis (strain G4 / LMG 22486) (Burkholderia cepacia (strain R1808)).